Consider the following 112-residue polypeptide: Thioredoxin (112 aa).

In terms of domain architecture, Thioredoxin spans 2-112 (SEDSATVAVT…ALLRELSDAL (111 aa)). Cys-35 and Cys-38 are disulfide-bonded.

It belongs to the thioredoxin family.

Participates in various redox reactions through the reversible oxidation of its active center dithiol to a disulfide and catalyzes dithiol-disulfide exchange reactions. The sequence is that of Thioredoxin (trxA) from Mycolicibacterium smegmatis (Mycobacterium smegmatis).